The primary structure comprises 201 residues: Transgelin (201 aa).

At Ala2 the chain carries N-acetylalanine. Positions 24 to 137 (EELEERLVEW…RTLMALGSLA (114 aa)) constitute a Calponin-homology (CH) domain. A Phosphoserine modification is found at Ser166. The residue at position 172 (Lys172) is an N6-acetyllysine. The Calponin-like repeat unit spans residues 175-200 (IGLQMGSNRGASQAGMTGYGRPRQII). Ser181 carries the phosphoserine modification. The residue at position 183 (Arg183) is an Omega-N-methylarginine.

Belongs to the calponin family.

It localises to the cytoplasm. Actin cross-linking/gelling protein. Involved in calcium interactions and contractile properties of the cell that may contribute to replicative senescence. This chain is Transgelin (TAGLN), found in Homo sapiens (Human).